The primary structure comprises 163 residues: 2-C-methyl-D-erythritol 2,4-cyclodiphosphate synthase (163 aa).

Residues Asp-12 and His-14 each contribute to the a divalent metal cation site. 4-CDP-2-C-methyl-D-erythritol 2-phosphate-binding positions include 12-14 (DVH) and 38-39 (HS). Residue His-46 participates in a divalent metal cation binding. Residues 60 to 62 (DIG), 136 to 139 (TTSE), Phe-143, and Arg-146 contribute to the 4-CDP-2-C-methyl-D-erythritol 2-phosphate site.

The protein belongs to the IspF family. As to quaternary structure, homotrimer. Requires a divalent metal cation as cofactor.

It catalyses the reaction 4-CDP-2-C-methyl-D-erythritol 2-phosphate = 2-C-methyl-D-erythritol 2,4-cyclic diphosphate + CMP. The protein operates within isoprenoid biosynthesis; isopentenyl diphosphate biosynthesis via DXP pathway; isopentenyl diphosphate from 1-deoxy-D-xylulose 5-phosphate: step 4/6. Involved in the biosynthesis of isopentenyl diphosphate (IPP) and dimethylallyl diphosphate (DMAPP), two major building blocks of isoprenoid compounds. Catalyzes the conversion of 4-diphosphocytidyl-2-C-methyl-D-erythritol 2-phosphate (CDP-ME2P) to 2-C-methyl-D-erythritol 2,4-cyclodiphosphate (ME-CPP) with a corresponding release of cytidine 5-monophosphate (CMP). The protein is 2-C-methyl-D-erythritol 2,4-cyclodiphosphate synthase of Xanthomonas campestris pv. campestris (strain 8004).